The chain runs to 491 residues: Nucleotidyltransferase MB21D2 (491 aa).

Over residues 431–442 (RGSTTSIPSPQS) the composition is skewed to polar residues. The interval 431-452 (RGSTTSIPSPQSDGGDPNQPDD) is disordered. Thr-435 is modified (phosphothreonine). Phosphoserine is present on residues Ser-436, Ser-439, and Ser-442.

This sequence belongs to the mab-21 family.

Probable nucleotidyltransferase that catalyzes the formation of cyclic dinucleotide second messenger in response to some unknown stimulus. The protein is Nucleotidyltransferase MB21D2 of Homo sapiens (Human).